A 214-amino-acid chain; its full sequence is dITP/XTP pyrophosphatase (214 aa).

16-21 (THNPGK) serves as a coordination point for substrate. Mg(2+)-binding residues include Asp-48 and Asp-77. The active-site Proton acceptor is the Asp-77. Substrate contacts are provided by residues Ser-78, 163–166 (FGYD), Lys-186, and 198–199 (HR).

It belongs to the HAM1 NTPase family. As to quaternary structure, homodimer. The cofactor is Mg(2+).

The enzyme catalyses XTP + H2O = XMP + diphosphate + H(+). It catalyses the reaction dITP + H2O = dIMP + diphosphate + H(+). The catalysed reaction is ITP + H2O = IMP + diphosphate + H(+). Pyrophosphatase that catalyzes the hydrolysis of nucleoside triphosphates to their monophosphate derivatives, with a high preference for the non-canonical purine nucleotides XTP (xanthosine triphosphate), dITP (deoxyinosine triphosphate) and ITP. Seems to function as a house-cleaning enzyme that removes non-canonical purine nucleotides from the nucleotide pool, thus preventing their incorporation into DNA/RNA and avoiding chromosomal lesions. In Bradyrhizobium sp. (strain BTAi1 / ATCC BAA-1182), this protein is dITP/XTP pyrophosphatase.